The chain runs to 364 residues: DNA replication and repair protein RecF (364 aa).

30–37 contacts ATP; the sequence is GNNGMGKT.

Belongs to the RecF family.

It localises to the cytoplasm. In terms of biological role, the RecF protein is involved in DNA metabolism; it is required for DNA replication and normal SOS inducibility. RecF binds preferentially to single-stranded, linear DNA. It also seems to bind ATP. This Porphyromonas gingivalis (strain ATCC BAA-308 / W83) protein is DNA replication and repair protein RecF.